Consider the following 348-residue polypeptide: Protein RecA (348 aa).

65–72 (GPESSGKT) provides a ligand contact to ATP.

Belongs to the RecA family.

The protein resides in the cytoplasm. Functionally, can catalyze the hydrolysis of ATP in the presence of single-stranded DNA, the ATP-dependent uptake of single-stranded DNA by duplex DNA, and the ATP-dependent hybridization of homologous single-stranded DNAs. It interacts with LexA causing its activation and leading to its autocatalytic cleavage. In Enterococcus gallinarum, this protein is Protein RecA.